Consider the following 694-residue polypeptide: DNA-binding protein RFX2 (694 aa).

A DNA-binding region (RFX-type winged-helix) is located at residues 174 to 249; sequence HLQWLLDNYE…YHYYGIRLKP (76 aa). Disordered regions lie at residues 268-309 and 659-694; these read QPIH…SQHH and DDVSELGSDNDGDPRISGQPPVKRERVDLNHSMQEM. Polar residues predominate over residues 288 to 299; the sequence is NTANSSQHTSPE. The span at 300-309 shows a compositional bias: low complexity; sequence QSVAAQSQHH.

Belongs to the RFX family. Homodimer. Heterodimer; heterodimerizes with other rfx proteins.

The protein localises to the nucleus. Its subcellular location is the cytoplasm. Functionally, transcription factor that acts as a key regulator of ciliogenesis. Specifically regulates expression of genes required for cilium assembly and function. Recognizes and binds the X-box, a regulatory motif with DNA sequence 5'-GTNRCC(0-3N)RGYAAC-3' present on promoters. Required for neural tube closure and neural ciliogenesis. This chain is DNA-binding protein RFX2 (rfx2), found in Xenopus tropicalis (Western clawed frog).